Here is a 453-residue protein sequence, read N- to C-terminus: tRNA modification GTPase MnmE (453 aa).

Arg22, Glu79, and Lys119 together coordinate (6S)-5-formyl-5,6,7,8-tetrahydrofolate. The region spanning 215–376 (GMKVVIAGRP…LKQHLKSLMG (162 aa)) is the TrmE-type G domain. Position 225 (Asn225) interacts with K(+). GTP-binding positions include 225 to 230 (NAGKSS), 244 to 250 (TDIAGTT), 269 to 272 (DTAG), and 334 to 337 (NKAD). Ser229 is a binding site for Mg(2+). Residues Thr244, Ile246, and Thr249 each contribute to the K(+) site. Residue Thr250 participates in Mg(2+) binding. Lys453 lines the (6S)-5-formyl-5,6,7,8-tetrahydrofolate pocket.

The protein belongs to the TRAFAC class TrmE-Era-EngA-EngB-Septin-like GTPase superfamily. TrmE GTPase family. As to quaternary structure, homodimer. Heterotetramer of two MnmE and two MnmG subunits. K(+) is required as a cofactor.

It is found in the cytoplasm. Exhibits a very high intrinsic GTPase hydrolysis rate. Involved in the addition of a carboxymethylaminomethyl (cmnm) group at the wobble position (U34) of certain tRNAs, forming tRNA-cmnm(5)s(2)U34. The chain is tRNA modification GTPase MnmE from Shewanella amazonensis (strain ATCC BAA-1098 / SB2B).